A 500-amino-acid chain; its full sequence is Lysine--tRNA ligase (500 aa).

Residues Glu-410 and Glu-417 each coordinate Mg(2+).

The protein belongs to the class-II aminoacyl-tRNA synthetase family. In terms of assembly, homodimer. Requires Mg(2+) as cofactor.

The protein localises to the cytoplasm. It catalyses the reaction tRNA(Lys) + L-lysine + ATP = L-lysyl-tRNA(Lys) + AMP + diphosphate. In Pseudomonas putida (strain ATCC 700007 / DSM 6899 / JCM 31910 / BCRC 17059 / LMG 24140 / F1), this protein is Lysine--tRNA ligase.